Consider the following 201-residue polypeptide: Glycerol-3-phosphate acyltransferase (201 aa).

4 consecutive transmembrane segments (helical) span residues 4-24 (IASL…LVSL), 84-104 (EIAM…FLAF), 116-136 (VLLA…LAVA), and 157-177 (AWFI…LLLV).

Belongs to the PlsY family. Probably interacts with PlsX.

The protein localises to the cell inner membrane. It catalyses the reaction an acyl phosphate + sn-glycerol 3-phosphate = a 1-acyl-sn-glycero-3-phosphate + phosphate. It participates in lipid metabolism; phospholipid metabolism. Its function is as follows. Catalyzes the transfer of an acyl group from acyl-phosphate (acyl-PO(4)) to glycerol-3-phosphate (G3P) to form lysophosphatidic acid (LPA). This enzyme utilizes acyl-phosphate as fatty acyl donor, but not acyl-CoA or acyl-ACP. The sequence is that of Glycerol-3-phosphate acyltransferase from Laribacter hongkongensis (strain HLHK9).